The chain runs to 1079 residues: Electrogenic sodium bicarbonate cotransporter 1 (1079 aa).

Residues 1 to 62 are required for interaction with AHCYL1; the sequence is MEDEAALDRG…EKKEKERVSE (62 aa). Over 1–466 the chain is Cytoplasmic; the sequence is MEDEAALDRG…FASDFYDALN (466 aa). Phosphotyrosine is present on Tyr-30. Positions 39 to 52 are enriched in basic residues; sequence YRRRRRHKRKAGHR. The interval 39-78 is disordered; that stretch reads YRRRRRHKRKAGHREKKEKERVSENYSDKSDVENADESSS. A compositionally biased stretch (basic and acidic residues) spans 53-70; it reads EKKEKERVSENYSDKSDV. Ser-61, Ser-65, Ser-68, Ser-223, Ser-232, Ser-233, and Ser-245 each carry phosphoserine. Positions 238 to 265 are disordered; the sequence is FTSPENGSPAMTHRNLTSSSLNDISDKP. Phosphothreonine occurs at positions 249 and 254. The span at 251 to 260 shows a compositional bias: polar residues; that stretch reads RNLTSSSLND. Phosphoserine is present on residues Ser-256, Ser-257, and Ser-262. The chain crosses the membrane as a helical span at residues 467 to 491; that stretch reads IQALSAILFIYLATVTNAITFGGLL. Residues 492–501 are Extracellular-facing; it reads GDATDNMQGV. A helical membrane pass occupies residues 502–520; the sequence is LESFLGTAVSGAVFCLFAG. Gln-521 is a topological domain (cytoplasmic). A discontinuously helical membrane pass occupies residues 522–542; it reads PLTILSSTGPVLVFERLLFNF. Residues 543–550 lie on the Extracellular side of the membrane; that stretch reads SKDHNFDY. Residues 551–571 traverse the membrane as a helical segment; that stretch reads LEFRLWIGLWSAFLCLILVAT. At 572–585 the chain is on the cytoplasmic side; it reads DASFLVQYFTRFTE. The chain crosses the membrane as a helical span at residues 586-609; the sequence is EGFSSLISFIFIYDAFKKMIKLAD. Residues 610–692 lie on the Extracellular side of the membrane; that stretch reads YYPINSNFKV…GNNCDFVPDI (83 aa). A helical membrane pass occupies residues 693-710; sequence TLMSFILFLGTYTSSMAL. At 711–725 the chain is on the cytoplasmic side; it reads KKFKTSRYFPTTARK. A helical membrane pass occupies residues 726–745; it reads LISDFAIILSILIFCVIDAL. Topologically, residues 746-779 are extracellular; that stretch reads VGVDTPKLIVPSEFKPTSPNRGWFVPPFGGNPWW. Residues 748–779 form an interaction with CA4 region; sequence VDTPKLIVPSEFKPTSPNRGWFVPPFGGNPWW. The helical transmembrane segment at 780-807 threads the bilayer; that stretch reads VYLAAAIPALLVTILIFMDQQITAVIVN. The Cytoplasmic segment spans residues 808 to 819; that stretch reads RKEHKLKKGAGY. Residues 820-836 traverse the membrane as a helical segment; that stretch reads HLDLFWVAILMVVCSFM. Residue Ala-837 is a topological domain, extracellular. The chain crosses the membrane as a discontinuously helical span at residues 838 to 855; sequence LPWYVAATVISIAHIDSL. Over 856-877 the chain is Cytoplasmic; the sequence is KMETETSAPGEQPKFLGVREQR. A helical membrane pass occupies residues 878–894; sequence VTGTLVFILTGLSVFMA. At 895–901 the chain is on the extracellular side; it reads PILKFIP. Residues 902 to 918 traverse the membrane as a helical segment; it reads MPVLYGVFLYMGVASLN. Topologically, residues 919–960 are cytoplasmic; the sequence is GVQFMDRLKLLLMPLKHQPDFIYLRHVPLRRVHLFTFLQVLC. An intramembrane region (discontinuously helical) is located at residues 961–986; the sequence is LALLWILKSTVAAIIFPVMILALVAV. Over 987–1079 the chain is Cytoplasmic; the sequence is RKGMDYLFSQ…PTFLERHTSC (93 aa). The segment at 1002 to 1004 is CA2-binding; sequence LDD. The disordered stretch occupies residues 1012–1079; the sequence is KKKEDEKKKK…PTFLERHTSC (68 aa). The residue at position 1026 (Ser-1026) is a Phosphoserine; by PKA. The residue at position 1029 (Ser-1029) is a Phosphoserine. Residues 1030 to 1033 form a CA2-binding region; the sequence is DSDD. 2 positions are modified to phosphoserine: Ser-1034 and Ser-1044. The tract at residues 1057 to 1059 is required for basolateral targeting; that stretch reads FLS. Residues 1062-1079 are compositionally biased toward basic and acidic residues; it reads KPSDRERSPTFLERHTSC. Ser-1069 bears the Phosphoserine mark.

It belongs to the anion exchanger (TC 2.A.31) family. In terms of assembly, homodimer. Interacts with CA2/carbonic anhydrase 2 and CA4/carbonic anhydrase 4 which may regulate transporter activity. Isoform 1 but not isoform 2 interacts with AHCYL1 (via PEST domain when phosphorylated); the interaction increases SLC4A4 isoform 1 activity. Interacts with AHCYL2. Post-translationally, phosphorylation of Ser-1026 by PKA increases the binding of CA2 and changes the Na(+):HCO3(-) stoichiometry of the transporter from 3:1 to 2:1. Phosphorylated in presence of STK39 and dephosphorylated in presence of PP1 phosphatase; phosphorylation seems to inhibit SLC4A4 activity. N-glycosylated. May not be necessary for the transporter basic functions. Expressed in vas deferens epithelia (at protein level).

The protein localises to the basolateral cell membrane. The protein resides in the cell membrane. It carries out the reaction 2 hydrogencarbonate(out) + Na(+)(out) = 2 hydrogencarbonate(in) + Na(+)(in). It catalyses the reaction 3 hydrogencarbonate(out) + Na(+)(out) = 3 hydrogencarbonate(in) + Na(+)(in). Electrogenic sodium/bicarbonate cotransporter with a Na(+):HCO3(-) stoichiometry varying from 1:2 to 1:3. May regulate bicarbonate influx/efflux at the basolateral membrane of cells and regulate intracellular pH. This chain is Electrogenic sodium bicarbonate cotransporter 1 (SLC4A4), found in Sus scrofa (Pig).